We begin with the raw amino-acid sequence, 245 residues long: Phycocyanobilin:ferredoxin oxidoreductase (245 aa).

Belongs to the HY2 family.

The enzyme catalyses (2R,3Z)-phycocyanobilin + 4 oxidized [2Fe-2S]-[ferredoxin] = biliverdin IXalpha + 4 reduced [2Fe-2S]-[ferredoxin] + 4 H(+). Its function is as follows. Catalyzes the four-electron reduction of biliverdin IX-alpha (2-electron reduction at both the A and D rings); the reaction proceeds via an isolatable 2-electron intermediate, 181,182-dihydrobiliverdin. The polypeptide is Phycocyanobilin:ferredoxin oxidoreductase (Rippkaea orientalis (strain PCC 8801 / RF-1) (Cyanothece sp. (strain PCC 8801))).